Consider the following 32-residue polypeptide: Calichemicin antitumor antibiotic biosynthesis protein (32 aa).

This Micromonospora echinospora (Micromonospora purpurea) protein is Calichemicin antitumor antibiotic biosynthesis protein.